The primary structure comprises 186 residues: Histone deacetylase complex subunit SAP25 (186 aa).

Disordered stretches follow at residues 1-25 (MSPLPLRDPSHQANAGPRLVEPSCG) and 148-186 (EQTPNCVASSLPSTSCPDPVSVSEDPGPSGDQSCSGTDT). 2 stretches are compositionally biased toward polar residues: residues 148-163 (EQTPNCVASSLPSTSC) and 177-186 (GDQSCSGTDT).

May be a component of the mSIN3A corepressor complex. Interacts with SIN3A and HDAC2. In terms of tissue distribution, widely expressed.

It localises to the nucleus. The protein resides in the cytoplasm. Its function is as follows. Involved in the transcriptional repression mediated by the mSIN3A but not the N-CoR corepressor complex. The polypeptide is Histone deacetylase complex subunit SAP25 (Sap25) (Mus musculus (Mouse)).